Here is a 313-residue protein sequence, read N- to C-terminus: MPVKIPDHLPAAGILESENIFVMSETRAANQDIRPMKVLILNLMPNKIETETQLLRLLGNTPLQVDVDLLRIHDKESKHTSIDHMNTFYRDFEDVRHKNYDGLIITGAPLGQIDFEEVTYWDHIREIIDWSQQHVTSVLFLCWAAHAGLYHLYGLNRKILQQKRSGVFVHRRTCQHFPLLRGFDDEFFAPHSRFAEMDIEELKQHPELQVLAESDEAGAYLVLSRNNRNLFVMGHPEYQKSTLNDEYHRDLAQGLNPNVPQNYYRNDDPQADAIARWHSHGSLLVSNWLNYYVYQLTPYDLSDMTAMTPWESQ.

C142 (acyl-thioester intermediate) is an active-site residue. Substrate is bound by residues K163 and S192. H235 (proton acceptor) is an active-site residue. Residue E237 is part of the active site. A substrate-binding site is contributed by R249.

It belongs to the MetA family.

Its subcellular location is the cytoplasm. The enzyme catalyses L-homoserine + succinyl-CoA = O-succinyl-L-homoserine + CoA. It functions in the pathway amino-acid biosynthesis; L-methionine biosynthesis via de novo pathway; O-succinyl-L-homoserine from L-homoserine: step 1/1. Transfers a succinyl group from succinyl-CoA to L-homoserine, forming succinyl-L-homoserine. In Shewanella sp. (strain MR-4), this protein is Homoserine O-succinyltransferase.